The sequence spans 336 residues: Foldase protein PrsA (336 aa).

The signal sequence occupies residues 1–22 (MKSAKKLLSVLCLGIFILTFTA). Cys23 carries N-palmitoyl cysteine lipidation. A lipid anchor (S-diacylglycerol cysteine) is attached at Cys23. The PpiC domain occupies 194–286 (PNTMNVSHIL…WGYHIIKVNS (93 aa)).

It belongs to the PrsA family.

Its subcellular location is the cell membrane. The catalysed reaction is [protein]-peptidylproline (omega=180) = [protein]-peptidylproline (omega=0). In terms of biological role, plays a major role in protein secretion by helping the post-translocational extracellular folding of several secreted proteins. The protein is Foldase protein PrsA of Clostridium botulinum (strain ATCC 19397 / Type A).